The chain runs to 258 residues: 5'-nucleotidase SurE (258 aa).

Aspartate 18, aspartate 19, serine 49, and asparagine 102 together coordinate a divalent metal cation.

It belongs to the SurE nucleotidase family. A divalent metal cation serves as cofactor.

It localises to the cytoplasm. It carries out the reaction a ribonucleoside 5'-phosphate + H2O = a ribonucleoside + phosphate. Functionally, nucleotidase that shows phosphatase activity on nucleoside 5'-monophosphates. The polypeptide is 5'-nucleotidase SurE (Vibrio campbellii (strain ATCC BAA-1116)).